Here is a 374-residue protein sequence, read N- to C-terminus: MYLQQLHLIQFRNYVAQQVEFSAPKTILVGPNAQGKSNLLEAVELLSTLKSHRVSRDRDLVKDGESLSQVTATLQRESGPLDLSLTLRANGRRTVSVNSETIRRQLDFLGHLNIVQFSSLDMDLVRGGPGERRNWLDAVLVQLEPVYAHLLQQYQQVLKQRNAYLKHHRADDAPQLDPQQLVLWNQQLAASGSRVIQRRQRMLMRLVPLAGHWHQTISGHQEQLEILYTPNVSYDPQFPEQLYPQFLSQLEEKSMLEQLQGLSLVGPHRDEVTLLINGTPARQYGSQGQQRTLVLALKLAELKLIEEVVGEAPLLLLDDVLAELDLNRQNQLLDAIQTRFQTLITTTHLGAFDAKWLDSAQILTVKAGQVQFST.

Position 30 to 37 (Gly30 to Ser37) interacts with ATP.

Belongs to the RecF family.

It localises to the cytoplasm. The RecF protein is involved in DNA metabolism; it is required for DNA replication and normal SOS inducibility. RecF binds preferentially to single-stranded, linear DNA. It also seems to bind ATP. This Acaryochloris marina (strain MBIC 11017) protein is DNA replication and repair protein RecF.